A 159-amino-acid chain; its full sequence is Ribosomal RNA large subunit methyltransferase H (159 aa).

Residues Gly108 and 127–132 contribute to the S-adenosyl-L-methionine site; that span reads FSKMTF.

This sequence belongs to the RNA methyltransferase RlmH family. In terms of assembly, homodimer.

It is found in the cytoplasm. The enzyme catalyses pseudouridine(1915) in 23S rRNA + S-adenosyl-L-methionine = N(3)-methylpseudouridine(1915) in 23S rRNA + S-adenosyl-L-homocysteine + H(+). Specifically methylates the pseudouridine at position 1915 (m3Psi1915) in 23S rRNA. The polypeptide is Ribosomal RNA large subunit methyltransferase H (Clostridium acetobutylicum (strain ATCC 824 / DSM 792 / JCM 1419 / IAM 19013 / LMG 5710 / NBRC 13948 / NRRL B-527 / VKM B-1787 / 2291 / W)).